The sequence spans 312 residues: MKMKVLEAKIIYESDDLEKYKKIISDIFYSFGVTGLKIEEPILNKDPLNFYKDEKQFLISENSVSAYFPLNIYSEKRKKVLEETFAEKFSEDEDIVYNLDFYEYDEEDYQNSWKKYLFVEKVSEKFVVKPTWREYEKQDNELVIELDPGRAFGTGSHPTTSLLLKLMEEQDFSNKSVIDIGTGSGILMIAGKILGAGEVYGTDIDEFSMEVAKENLILNNISLNDVKLLKGNLLEVIENKKFDIVVCNILADILVKLLDEIKYILKENSIVLFSGIIEDKLNEVISKAEDVGLEVVEVKADKEWRAVYFKRK.

Positions 160, 181, 203, and 248 each coordinate S-adenosyl-L-methionine.

This sequence belongs to the methyltransferase superfamily. PrmA family.

It is found in the cytoplasm. The enzyme catalyses L-lysyl-[protein] + 3 S-adenosyl-L-methionine = N(6),N(6),N(6)-trimethyl-L-lysyl-[protein] + 3 S-adenosyl-L-homocysteine + 3 H(+). In terms of biological role, methylates ribosomal protein L11. This is Ribosomal protein L11 methyltransferase from Fusobacterium nucleatum subsp. nucleatum (strain ATCC 25586 / DSM 15643 / BCRC 10681 / CIP 101130 / JCM 8532 / KCTC 2640 / LMG 13131 / VPI 4355).